A 276-amino-acid polypeptide reads, in one-letter code: U6 snRNA phosphodiesterase 1 (276 aa).

Positions 1-58 (MIVNYSSSSSEEESGSSSSPSGKRQKLDTETSEALDHGSAQRKVCKSSHLTPRLPLPE) are disordered. The active-site Proton acceptor is the His131. Residues 131–133 (HLS), Tyr213, and 215–221 (DPSFHIS) contribute to the AMP site. Residues Tyr213 and 217-221 (SFHIS) contribute to the UMP site. His219 serves as the catalytic Proton donor.

It belongs to the 2H phosphoesterase superfamily. USB1 family.

It is found in the nucleus. It carries out the reaction a 3'-end uridylyl-uridine-RNA = a 3'-end 2',3'-cyclophospho-uridine-RNA + uridine. It catalyses the reaction a 3'-end uridylyl-adenosine-RNA = a 3'-end 2',3'-cyclophospho-uridine-RNA + adenosine. 3'-5' RNA exonuclease that trims the 3' end of oligo(U) and oligo(A) tracts of the pre-U6 small nuclear RNA (snRNA) molecule, leading to the formation of a mature U6 snRNA 3' end-terminated with a 2',3'-cyclic phosphate. Participates in the U6 snRNA 3' end processing that prevents U6 snRNA degradation. In addition also removes uridines from the 3' end of U6atac snRNA and possibly the vault RNA VTRNA1-1. The polypeptide is U6 snRNA phosphodiesterase 1 (Danio rerio (Zebrafish)).